We begin with the raw amino-acid sequence, 441 residues long: MTQPSLNSLYSDHLRTLTARADEALQRGGFAHLVVPSGNTHYQLFDDRDYPYAVNPQFKAWLPLTRVPHSWLVYTPGKRPIVIFYQPFDYWHVVPDAPSGWWVEHCDIHIIRRPDEALALLPKQAERCAILGEAQSTLGAYVPNNPQPVLDYLEYQRAFKTAYELALLRIAQQLAVRGHRAAEAAFRAGQSEFGIHMAYCAAVGQDANELPYGNIIALNEHGAVLHYTELGQQPPQPLRSFLIDAGASAYGYASDITRTYAADPGSDFQALINAVDAAQLRMGQNVRAGVDYKQLHIDAHLALMGILKEFGVLTVSPEAALATGISAAFFPHGLGHLIGLQVHDVAGFAASDRGGRIQRPEGHPYLRLTRVLEPGMVVTIEPGVYFIDMLLDEVKKNGHAASVNWQRVEAFKPYGGIRIEDEVVCTDGNAENLTRPVFAAA.

The Mn(2+) site is built by Asp-244, Asp-255, His-336, Glu-381, and Glu-420.

The protein belongs to the peptidase M24B family. Bacterial-type prolidase subfamily. Mn(2+) is required as a cofactor.

The catalysed reaction is Xaa-L-Pro dipeptide + H2O = an L-alpha-amino acid + L-proline. In terms of biological role, splits dipeptides with a prolyl residue in the C-terminal position. The polypeptide is Xaa-Pro dipeptidase (Xanthomonas oryzae pv. oryzae (strain MAFF 311018)).